The chain runs to 394 residues: Hemagglutinin-esterase (394 aa).

Positions 1–16 (MARFIILFLLLAPVYS) are cleaved as a signal peptide. Residues 17-347 (RLCLRNHPDT…NNRVDAIPPQ (331 aa)) are Extracellular-facing. Ser32 is a catalytic residue. Positions 119-121 (RGD) match the Cell attachment site motif. Catalysis depends on residues Asp261 and His264. A glycan (N-linked (GlcNAc...) asparagine; by host) is linked at Asn333. The interval 335 to 358 (TDVNNRVDAIPPQLSNIFISMGVA) is highly polymorphic region. Residues 348 to 368 (LSNIFISMGVAGFGIALFLAG) traverse the membrane as a helical segment. Residues 369–394 (WKACVWIAAFMYKSRGRNPPANLSVA) lie on the Cytoplasmic side of the membrane.

It is found in the host membrane. The protein localises to the virion membrane. The catalysed reaction is N-acetyl-9-O-acetylneuraminate + H2O = N-acetylneuraminate + acetate + H(+). It catalyses the reaction N-acetyl-4-O-acetylneuraminate + H2O = N-acetylneuraminate + acetate + H(+). Its function is as follows. Performs attachment to host receptor thereby inducing virus particle entry into target cell. Binds specifically to 5-N-acetyl-4-O-acetyl neuraminic acid on host cells, which plays a major role in cell tropism of the virus. ALso mediates de-O-acetylation of N-acetyl-4-O-acetylneuraminic acid. This receptor-destroying activity is important for virus release as it probably helps preventing self-aggregation and ensures the efficient spread of the progeny virus from cell to cell. The highly polymorphic region (HPR) modulates the virulence in host. Catalyzes the removal of terminal sialic acid residues from viral and cellular glycoconjugates. This is Hemagglutinin-esterase from Gadus morhua (Atlantic cod).